Here is a 110-residue protein sequence, read N- to C-terminus: NADH dehydrogenase [ubiquinone] iron-sulfur protein 6, mitochondrial (110 aa).

The transit peptide at 1–22 (MASNLLKALIRSQILPSSRRNF) directs the protein to the mitochondrion.

This sequence belongs to the complex I NDUFS6 subunit family. Complex I is composed of at least 49 different subunits. This is a component of the iron-sulfur (IP) fragment of the enzyme.

It is found in the mitochondrion inner membrane. Functionally, accessory subunit of the mitochondrial membrane respiratory chain NADH dehydrogenase (Complex I), that is believed not to be involved in catalysis. Complex I functions in the transfer of electrons from NADH to the respiratory chain. The immediate electron acceptor for the enzyme is believed to be ubiquinone. This chain is NADH dehydrogenase [ubiquinone] iron-sulfur protein 6, mitochondrial, found in Arabidopsis thaliana (Mouse-ear cress).